We begin with the raw amino-acid sequence, 308 residues long: Atrochrysone carboxyl ACP thioesterase (308 aa).

Zn(2+)-binding residues include histidine 99, histidine 101, aspartate 103, and histidine 104. Aspartate 103 (proton donor/acceptor) is an active-site residue.

Belongs to the metallo-beta-lactamase superfamily. Zn(2+) is required as a cofactor.

The catalysed reaction is atrochrysone carboxyl-[ACP] + H2O = atrochrysone carboxylate + holo-[ACP] + H(+). Its pathway is secondary metabolite biosynthesis. In terms of biological role, atrochrysone carboxyl ACP thioesterase; part of the gene cluster that mediates the biosynthesis of physcion, a natural anthraquinone fungicide that can prevent plant fungal infections. The pathway begins with the polyketide synthase AcPKS that condenses 8 malonyl-CoA units to synthesize atrochrysone thioester which is released from the synthase by the atrochrysone carboxyl ACP thioesterase AcTE that breaks the thioester bond and leads to free atrochrysone carboxylic acid. Spontaneous decarboxylation of atrochrysone carboxylic acid leads to the formation of atrochrysone. Then, atrochrysone undergoes spontaneous dehydration and oxidation, giving the products emodin anthrone and emodin. The O-methyltransferase AcOMT then methylates the C-6 hydroxyl of emodin to form physcion. This Aspergillus chevalieri (Eurotium chevalieri) protein is Atrochrysone carboxyl ACP thioesterase.